The primary structure comprises 253 residues: Non-homologous end joining protein Ku (253 aa).

Positions 9–192 (ISFGLVNIPV…EITEEELELA (184 aa)) constitute a Ku domain.

Belongs to the prokaryotic Ku family. In terms of assembly, homodimer. Interacts with LigD.

In terms of biological role, with LigD forms a non-homologous end joining (NHEJ) DNA repair enzyme, which repairs dsDNA breaks with reduced fidelity. Binds linear dsDNA with 5'- and 3'- overhangs but not closed circular dsDNA nor ssDNA. Recruits and stimulates the ligase activity of LigD. In Archaeoglobus fulgidus (strain ATCC 49558 / DSM 4304 / JCM 9628 / NBRC 100126 / VC-16), this protein is Non-homologous end joining protein Ku.